Consider the following 219-residue polypeptide: Probable glutathione S-transferase MSR-1 (219 aa).

The region spanning 4-83 is the GST N-terminal domain; it reads NNVVLLDFSG…YIDEVWHEKC (80 aa). Glutathione is bound by residues S14, K41, I55, and 67–68; that span reads ES. The region spanning 89–208 is the GST C-terminal domain; the sequence is DPYQRSQARF…LPHPHKIYDF (120 aa).

The protein belongs to the GST superfamily. HSP26 family.

The catalysed reaction is RX + glutathione = an S-substituted glutathione + a halide anion + H(+). Functionally, may play an important role in hormonal and growth regulatory responses. This Nicotiana plumbaginifolia (Leadwort-leaved tobacco) protein is Probable glutathione S-transferase MSR-1 (MSR-1).